Consider the following 344-residue polypeptide: Polyhomeotic-like protein 2 (344 aa).

Residues 1–23 (MTSGNGSSPVPTAATGNRTQNGE) show a composition bias toward polar residues. Residues 1-28 (MTSGNGSSPVPTAATGNRTQNGENKPPQ) are disordered. The short motif at 25-53 (KPPQAVVKPQILTHFIEGFVIQEGAQPFP) is the HD1 element. The FCS-type zinc-finger motif lies at 114–148 (GDGDPPKLKCELCGRVDFEYKFKRSKRFCSMACAK). Zn(2+)-binding residues include Cys123, Cys126, Cys142, and Cys146. The tract at residues 165 to 269 (RSKLQKPTVA…LHSRDPIAMS (105 aa)) is disordered. Over residues 173–183 (VAKHARRRSRK) the composition is skewed to basic residues. The segment covering 216–233 (KLSNSQEDSSRCSDNSSY) has biased composition (polar residues). Positions 234-248 (EEPLSPMSASSSLSR) are enriched in low complexity. Residues 280-344 (WNVEDVYDFV…YARISMLKDS (65 aa)) form the SAM domain.

Component of a PRC1-like complex.

It localises to the nucleus. Its function is as follows. Component of a Polycomb group (PcG) multiprotein PRC1-like complex, a complex class required to maintain the transcriptionally repressive state of many genes, including Hox genes, throughout development. PcG PRC1 complex acts via chromatin remodeling and modification of histones; it mediates monoubiquitination of histone H2A 'Lys-119', rendering chromatin heritably changed in its expressibility. The protein is Polyhomeotic-like protein 2 (phc2) of Xenopus laevis (African clawed frog).